We begin with the raw amino-acid sequence, 207 residues long: Small ribosomal subunit protein uS4 (207 aa).

The S4 RNA-binding domain occupies 96-156 (RRLDNVVYRL…EKFKTSSFIA (61 aa)).

Belongs to the universal ribosomal protein uS4 family. In terms of assembly, part of the 30S ribosomal subunit. Contacts protein S5. The interaction surface between S4 and S5 is involved in control of translational fidelity.

Its function is as follows. One of the primary rRNA binding proteins, it binds directly to 16S rRNA where it nucleates assembly of the body of the 30S subunit. With S5 and S12 plays an important role in translational accuracy. The sequence is that of Small ribosomal subunit protein uS4 from Leptospira interrogans serogroup Icterohaemorrhagiae serovar copenhageni (strain Fiocruz L1-130).